Consider the following 352-residue polypeptide: tRNA pseudouridine synthase D (352 aa).

The Nucleophile role is filled by D81. The 147-residue stretch at 157-303 folds into the TRUD domain; it reads GVPNYFGTQR…MDHERRILRL (147 aa).

It belongs to the pseudouridine synthase TruD family.

The catalysed reaction is uridine(13) in tRNA = pseudouridine(13) in tRNA. Its function is as follows. Responsible for synthesis of pseudouridine from uracil-13 in transfer RNAs. The polypeptide is tRNA pseudouridine synthase D (Pseudomonas putida (strain ATCC 47054 / DSM 6125 / CFBP 8728 / NCIMB 11950 / KT2440)).